A 263-amino-acid polypeptide reads, in one-letter code: Taurine import ATP-binding protein TauB (263 aa).

An ABC transporter domain is found at 4–235 (LTAEAISLSF…RYAAGETVRS (232 aa)). 40–47 (GPSGCGKS) is a binding site for ATP.

Belongs to the ABC transporter superfamily. Taurine importer (TC 3.A.1.17.1) family. As to quaternary structure, the complex is composed of two ATP-binding proteins (TauB), two transmembrane proteins (TauC) and a solute-binding protein (TauA).

It localises to the cell inner membrane. It catalyses the reaction taurine(out) + ATP + H2O = taurine(in) + ADP + phosphate + H(+). In terms of biological role, part of the ABC transporter complex TauABC involved in taurine import. Responsible for energy coupling to the transport system. This chain is Taurine import ATP-binding protein TauB, found in Pseudomonas aeruginosa (strain UCBPP-PA14).